Consider the following 650-residue polypeptide: Probable potassium transport system protein Kup 1 (650 aa).

12 consecutive transmembrane segments (helical) span residues 12 to 32 (GLLI…LYVM), 54 to 74 (ISLV…IIAL), 97 to 117 (WLVL…TLTP), 139 to 159 (VSSQ…LFSI), 170 to 190 (AFGP…LINM), 216 to 236 (AGIF…ALYS), 249 to 269 (SWPF…VWIL), 295 to 315 (LAAI…LITG), 344 to 364 (IYIP…VLYF), 375 to 395 (GLSI…WLAM), 400 to 420 (PVWN…FMIS), and 428 to 448 (GGYV…VWYY).

This sequence belongs to the HAK/KUP transporter (TC 2.A.72) family.

The protein localises to the cell membrane. The enzyme catalyses K(+)(in) + H(+)(in) = K(+)(out) + H(+)(out). Its function is as follows. Transport of potassium into the cell. Likely operates as a K(+):H(+) symporter. This Lactobacillus acidophilus (strain ATCC 700396 / NCK56 / N2 / NCFM) protein is Probable potassium transport system protein Kup 1.